An 83-amino-acid chain; its full sequence is U15-theraphotoxin-Cg1a (83 aa).

Positions 1-21 (MKAAILLAFAGLALLSVICHA) are cleaved as a signal peptide. Positions 22-49 (SENVEQDSFEEVFSAIFAMEDDLKPKER) are excised as a propeptide. 3 cysteine pairs are disulfide-bonded: Cys51-Cys66, Cys58-Cys71, and Cys65-Cys77. The residue at position 81 (Ala81) is an Alanine amide.

The protein belongs to the neurotoxin 10 (Hwtx-1) family. 66 (Jztx-24) subfamily. Expressed by the venom gland.

It localises to the secreted. Probable ion channel inhibitor. The protein is U15-theraphotoxin-Cg1a of Chilobrachys guangxiensis (Chinese earth tiger tarantula).